The following is a 423-amino-acid chain: Adenylosuccinate synthetase (423 aa).

GTP-binding positions include 12-18 (GDEGKGK) and 40-42 (GHT). The active-site Proton acceptor is the Asp13. Mg(2+) is bound by residues Asp13 and Gly40. IMP is bound by residues 13–16 (DEGK), 38–41 (NAGH), Thr129, Arg143, Gln221, Thr236, and Arg300. Residue His41 is the Proton donor of the active site. 296–302 (AVTGRKR) is a binding site for substrate. Residues Arg302, 328–330 (KSD), and 408–410 (SVG) contribute to the GTP site.

This sequence belongs to the adenylosuccinate synthetase family. Homodimer. The cofactor is Mg(2+).

It localises to the cytoplasm. It carries out the reaction IMP + L-aspartate + GTP = N(6)-(1,2-dicarboxyethyl)-AMP + GDP + phosphate + 2 H(+). It functions in the pathway purine metabolism; AMP biosynthesis via de novo pathway; AMP from IMP: step 1/2. Functionally, plays an important role in the de novo pathway of purine nucleotide biosynthesis. Catalyzes the first committed step in the biosynthesis of AMP from IMP. This is Adenylosuccinate synthetase from Parabacteroides distasonis (strain ATCC 8503 / DSM 20701 / CIP 104284 / JCM 5825 / NCTC 11152).